Here is a 321-residue protein sequence, read N- to C-terminus: NADPH-dependent codeinone reductase 1-1 (321 aa).

NADPH-binding residues include threonine 27 and aspartate 51. Catalysis depends on proton donor residues tyrosine 56 and histidine 119. Residue histidine 119 coordinates substrate. NADPH is bound by residues glutamine 187, serine 214, leucine 216, serine 264, and arginine 269.

Belongs to the aldo/keto reductase family. In terms of tissue distribution, latex secreting cells (laticifer cells). Expressed constitutively and ubiquitously with highest levels in capsules. Restricted to the parietal region of sieve elements adjacent or proximal to laticifers in roots, stems, leaves and carpels.

The protein resides in the cytoplasm. It localises to the cytosol. The enzyme catalyses codeine + NADP(+) = codeinone + NADPH + H(+). It catalyses the reaction neopine + NADP(+) = neopinone + NADPH + H(+). It carries out the reaction morphine + NADP(+) = morphinone + NADPH + H(+). The catalysed reaction is neomorphine + NADP(+) = neomorphinone + NADPH + H(+). It functions in the pathway alkaloid biosynthesis; morphine biosynthesis. Functionally, NADPH-dependent reductase involved in biosynthesis of morphinan-type benzylisoquinoline and opiate alkaloids natural products. Reduces codeinone to codeine in the penultimate step in morphine biosynthesis. Can use morphinone, hydrocodone and hydromorphone as substrate during reductive reaction with NADPH as cofactor, and morphine and dihydrocodeine as substrate during oxidative reaction with NADP as cofactor. Converts morphinone to morphine, and neomorphinone to neomorphine. Reduces irreversibly neopinone, a spontaneous isomer of codeinone, to neopine; in planta, neopine levels are limited to low levels. In Papaver somniferum (Opium poppy), this protein is NADPH-dependent codeinone reductase 1-1.